A 1189-amino-acid chain; its full sequence is Pumilio homolog 1 (1189 aa).

An N-acetylserine modification is found at Ser-2. At Ser-19 the chain carries Phosphoserine. Residues 22–73 are disordered; that stretch reads LKHHPQEPANPNMPVVLTSGTGSQAQPQPAANQALAAGTHSSPVPGSIGVAG. A compositionally biased stretch (low complexity) spans 45-58; sequence QAQPQPAANQALAA. Phosphoserine occurs at positions 75, 98, and 106. A Phosphothreonine modification is found at Thr-112. Phosphoserine is present on residues Ser-124, Ser-159, Ser-197, Ser-209, and Ser-229. Residues 233-272 form a disordered region; the sequence is SCLRKGGFGPRDADSDENDKGEKKNKGTFDGDKLGDLKEE. Over residues 250 to 272 the composition is skewed to basic and acidic residues; the sequence is NDKGEKKNKGTFDGDKLGDLKEE. At Ser-305 the chain carries Phosphoserine. The segment covering 491–503 has biased composition (low complexity); sequence QQSAPQAQQGQQQ. Disordered regions lie at residues 491-525 and 614-647; these read QQSAPQAQQGQQQVLRGGASQRPLTPNQNQQGQQT and AGTTNGPFRPLGTQQPQPQPQQQPSNNLASSSFY. Positions 512–525 are enriched in polar residues; sequence RPLTPNQNQQGQQT. The residue at position 515 (Thr-515) is a Phosphothreonine. Low complexity predominate over residues 627 to 647; it reads QQPQPQPQQQPSNNLASSSFY. 2 positions are modified to phosphoserine: Ser-710 and Ser-715. The disordered stretch occupies residues 743-773; the sequence is GPVGMPLPSQGPGHSQTPPPSLSSHGSSSSL. Low complexity predominate over residues 764-773; it reads LSSHGSSSSL. At Arg-797 the chain carries Omega-N-methylarginine. 2 positions are modified to phosphoserine: Ser-807 and Ser-823. The 343-residue stretch at 829–1171 folds into the PUM-HD domain; it reads GRSRLLEDFR…HILAKLEKYY (343 aa). Pumilio repeat units follow at residues 849-884, 885-920, 921-958, 959-994, 995-1030, 1031-1066, 1067-1102, and 1106-1145; these read EIAGHIMEFSQDQHGSRFIQLKLERATAAERQLVFN, EILQAAYQLMVDVFGNYVIQKFFEFGSHEQKLALAE, RIRGHVLSLALQMYGCRVIQKALEFIPSDQQVINEMVR, ELDGHVLKCVKDQNGNHVVQKCIECVQPQSLQFIID, AFKGQVFALSTHPYGCRVIQRILEHCLPDQTLPILE, ELHQHTEQLVQDQYGNYVIQHVLEHGRPEDKSKIVA, EIRGNVLVLSQHKFASNVVEKCVTHASRTERAVLID, and TMNDGPHSALYTMMKDQYANYVVQKMIDVAEPGQRKIVMH. Positions 864 to 868 are adenine-nucleotide binding in RNA target; that stretch reads SRFIQ. The tract at residues 900 to 904 is uracil-nucleotide binding in RNA target; sequence NYVIQ. Residues 936–940 are adenine-nucleotide binding in RNA target; the sequence is CRVIQ. Residues 974–978 form a non-specific-nucleotide binding in RNA target region; the sequence is NHVVQ. Positions 1010–1014 are adenine-nucleotide binding in RNA target; that stretch reads CRVIQ. Residues 1046-1050 are uracil-nucleotide binding in RNA target; the sequence is NYVIQ. Guanine-nucleotide binding in RNA target regions lie at residues 1082–1086 and 1083–1086; these read SNVVE and NVVE. The interval 1125–1129 is uracil-nucleotide binding in RNA target; sequence NYVVQ.

Recruits the CCR4-POP2-NOT deadenylase leading to translational inhibition and mRNA degradation. Interacts with TRIM71 (via NHL repeats) in an RNA-dependent manner. Phosphorylation at Ser-715 promotes RNA-binding activity. Following growth factor stimulation phosphorylated at Ser-715, promoting binding to the 3'-UTR of CDKN1B/p27 mRNA. As to expression, widely expressed. Expressed in brain, heart, kidney, liver, lung, skin, intestine, spleen, testis and thymus. Weakly or not expressed in muscles and stomach. Expressed at various stages of myeloid and lymphoid cell development. Highly expressed in testis. Expressed in all major brain regions (at protein level).

The protein resides in the cytoplasm. It is found in the P-body. The protein localises to the cytoplasmic granule. Functionally, sequence-specific RNA-binding protein that acts as a post-transcriptional repressor by binding the 3'-UTR of mRNA targets. Binds to an RNA consensus sequence, the Pumilio Response Element (PRE), 5'-UGUANAUA-3', that is related to the Nanos Response Element (NRE). Mediates post-transcriptional repression of transcripts via different mechanisms: acts via direct recruitment of the CCR4-POP2-NOT deadenylase leading to translational inhibition and mRNA degradation. Also mediates deadenylation-independent repression by promoting accessibility of miRNAs. Following growth factor stimulation, phosphorylated and binds to the 3'-UTR of CDKN1B/p27 mRNA, inducing a local conformational change that exposes miRNA-binding sites, promoting association of miR-221 and miR-222, efficient suppression of CDKN1B/p27 expression, and rapid entry to the cell cycle. Acts as a post-transcriptional repressor of E2F3 mRNAs by binding to its 3'-UTR and facilitating miRNA regulation. Represses a program of genes necessary to maintain genomic stability such as key mitotic, DNA repair and DNA replication factors. Its ability to repress those target mRNAs is regulated by the lncRNA NORAD (non-coding RNA activated by DNA damage) which, due to its high abundance and multitude of PUMILIO binding sites, is able to sequester a significant fraction of PUM1 and PUM2 in the cytoplasm. Involved in neuronal functions by regulating ATXN1 mRNA levels: acts by binding to the 3'-UTR of ATXN1 transcripts, leading to their down-regulation independently of the miRNA machinery. In testis, acts as a post-transcriptional regulator of spermatogenesis by binding to the 3'-UTR of mRNAs coding for regulators of p53/TP53. Involved in embryonic stem cell renewal by facilitating the exit from the ground state: acts by targeting mRNAs coding for naive pluripotency transcription factors and accelerates their down-regulation at the onset of differentiation. Binds specifically to miRNA MIR199A precursor, with PUM2, regulates miRNA MIR199A expression at a postranscriptional level. This chain is Pumilio homolog 1, found in Mus musculus (Mouse).